A 277-amino-acid polypeptide reads, in one-letter code: Small ribosomal subunit protein uS2 (277 aa).

The segment at 247-277 (LSAFESSQDDESDEENREEDLLAKKFDGEAN) is disordered. Over residues 253 to 264 (SQDDESDEENRE) the composition is skewed to acidic residues. Residues 265–277 (EDLLAKKFDGEAN) are compositionally biased toward basic and acidic residues.

It belongs to the universal ribosomal protein uS2 family.

The protein is Small ribosomal subunit protein uS2 (rpsB) of Chlamydia pneumoniae (Chlamydophila pneumoniae).